The sequence spans 320 residues: Ferrochelatase (320 aa).

2 residues coordinate Fe cation: His194 and Glu275.

It belongs to the ferrochelatase family. In terms of assembly, monomer.

The protein localises to the cytoplasm. The enzyme catalyses heme b + 2 H(+) = protoporphyrin IX + Fe(2+). It functions in the pathway porphyrin-containing compound metabolism; protoheme biosynthesis; protoheme from protoporphyrin-IX: step 1/1. In terms of biological role, catalyzes the ferrous insertion into protoporphyrin IX. This is Ferrochelatase from Escherichia coli O127:H6 (strain E2348/69 / EPEC).